The following is a 206-amino-acid chain: MPSLLITILLLNIVIYVINTIGAATIDSLLWLFYIKLPTGTSHMAREQRRLKREVIQLKREMNATSSQDEFAKWAKLRRRHDKALETYEAKNNELTQCKSSFDMTVKSVRWAATSGLMLFLQFWYSKRPIFTLPPGWIPWQVQWVLSFPRAPMGTVSIQIWGGACATVVALVGDAVGATMGFVSASKKEGMKVGAGVGEKEGKKSQ.

Over 1–4 (MPSL) the chain is Lumenal. The chain crosses the membrane as a helical span at residues 5–24 (LITILLLNIVIYVINTIGAA). Residues 25 to 110 (TIDSLLWLFY…SFDMTVKSVR (86 aa)) lie on the Cytoplasmic side of the membrane. Residues 42-99 (SHMAREQRRLKREVIQLKREMNATSSQDEFAKWAKLRRRHDKALETYEAKNNELTQCK) are a coiled coil. Residues 111-131 (WAATSGLMLFLQFWYSKRPIF) traverse the membrane as a helical segment. The Lumenal portion of the chain corresponds to 132-155 (TLPPGWIPWQVQWVLSFPRAPMGT). The chain crosses the membrane as a helical span at residues 156 to 172 (VSIQIWGGACATVVALV). The Cytoplasmic portion of the chain corresponds to 173 to 206 (GDAVGATMGFVSASKKEGMKVGAGVGEKEGKKSQ).

The protein belongs to the WRB/GET1 family. Interacts with GET3.

The protein resides in the endoplasmic reticulum membrane. Required for the post-translational delivery of tail-anchored (TA) proteins to the endoplasmic reticulum. Acts as a membrane receptor for soluble GET3, which recognizes and selectively binds the transmembrane domain of TA proteins in the cytosol. The polypeptide is Protein GET1 (Ajellomyces dermatitidis (strain ER-3 / ATCC MYA-2586) (Blastomyces dermatitidis)).